Reading from the N-terminus, the 469-residue chain is Asparagine--tRNA ligase (469 aa).

This sequence belongs to the class-II aminoacyl-tRNA synthetase family. As to quaternary structure, homodimer.

It localises to the cytoplasm. The enzyme catalyses tRNA(Asn) + L-asparagine + ATP = L-asparaginyl-tRNA(Asn) + AMP + diphosphate + H(+). In Porphyromonas gingivalis (strain ATCC 33277 / DSM 20709 / CIP 103683 / JCM 12257 / NCTC 11834 / 2561), this protein is Asparagine--tRNA ligase.